Consider the following 164-residue polypeptide: Zinc finger protein ZAT8 (164 aa).

2 consecutive C2H2-type zinc fingers follow at residues Phe37 to His59 and His85 to His107.

The protein resides in the nucleus. In terms of biological role, probable transcription factor that may be involved in stress responses. The polypeptide is Zinc finger protein ZAT8 (ZAT8) (Arabidopsis thaliana (Mouse-ear cress)).